The chain runs to 191 residues: RNA polymerase sigma factor CnrH (191 aa).

Positions 49 to 62 (DVVQDTFVAAWHAL) match the Polymerase core binding motif. A DNA-binding region (H-T-H motif) is located at residues 156–175 (QPEAAAVLGLSVKAVEGRIG).

Belongs to the sigma-70 factor family. ECF subfamily.

Sigma factors are initiation factors that promote the attachment of RNA polymerase to specific initiation sites and are then released. This sigma factor regulates the genes for a membrane-located efflux system that confers resistance to nickel and cobalt. Its function is as follows. CnrH alone is able to activate CNR expression, while both CnrY and CrnX are needed for nickel induction of cnrH. Binds DNA in an RNA polymerase-dependent fashion. CnrH may be controlled by a CnrYX transmembrane anti-sigma factor complex which binds CnrH in the absence of Ni(2+). If Ni(2+) appears in the periplasm, it may be bound by CnrR (CnrX); the signal then would be transmitted by CnrY into the cytoplasm and CnrH would be released. This chain is RNA polymerase sigma factor CnrH (cnrH), found in Cupriavidus metallidurans (strain ATCC 43123 / DSM 2839 / NBRC 102507 / CH34) (Ralstonia metallidurans).